The chain runs to 154 residues: MEATRFTFNTATLCSAQHCNCHKLTTKASGMPVQPPVWRPWIVTERDILRRNAIRERRSKPYARPSSTSNGSTRGPEPGPTSFQHPVKLHWSKPVYDYMYQYGKQLLDAFPVQATICIVDEDPAQSDDSDFESDYEDDSDTDYKPLKRNAPILN.

The WRPW motif signature appears at W38–W41. Disordered stretches follow at residues I54–P86 and E121–N154. Positions H85–V119 are ripply homology domain. Positions E121–D140 are enriched in acidic residues.

This sequence belongs to the ripply family. In the late gastrula stage, expression appears in the dorsal presomitic mesoderm and in the first three pairs of nascent somites. Expressed strongly in forming somites and then expression is rapidly down-regulated except in the first somite pair where expression is maintained for a longer period. Also expressed in the presumptive notochord and in the tail bud at the 48 hour larval stage. Expression disappears by the 72 hour stage.

It is found in the nucleus. May play a role in somitogenesis. This chain is Protein ripply, found in Branchiostoma belcheri (Amphioxus).